The sequence spans 188 residues: Adenine phosphoribosyltransferase (188 aa).

The protein belongs to the purine/pyrimidine phosphoribosyltransferase family. Homodimer.

It localises to the cytoplasm. The catalysed reaction is AMP + diphosphate = 5-phospho-alpha-D-ribose 1-diphosphate + adenine. The protein operates within purine metabolism; AMP biosynthesis via salvage pathway; AMP from adenine: step 1/1. Functionally, catalyzes a salvage reaction resulting in the formation of AMP, that is energically less costly than de novo synthesis. In Burkholderia thailandensis (strain ATCC 700388 / DSM 13276 / CCUG 48851 / CIP 106301 / E264), this protein is Adenine phosphoribosyltransferase.